We begin with the raw amino-acid sequence, 329 residues long: tRNA uridine(34) hydroxylase (329 aa).

Residues 123-217 enclose the Rhodanese domain; that stretch reads SDPETVLIDT…YLEEVPKEKS (95 aa). Cys-177 functions as the Cysteine persulfide intermediate in the catalytic mechanism. Positions 310–329 are disordered; the sequence is LNKQKKQQAKEAARKKTEKN. The span at 317–329 shows a compositional bias: basic and acidic residues; the sequence is QAKEAARKKTEKN.

It belongs to the TrhO family.

It catalyses the reaction uridine(34) in tRNA + AH2 + O2 = 5-hydroxyuridine(34) in tRNA + A + H2O. Its function is as follows. Catalyzes oxygen-dependent 5-hydroxyuridine (ho5U) modification at position 34 in tRNAs. This is tRNA uridine(34) hydroxylase from Francisella tularensis subsp. novicida (strain U112).